Consider the following 173-residue polypeptide: Peptidoglycan-associated lipoprotein (173 aa).

The signal sequence occupies residues 1-21; that stretch reads MQLNKVLKGLMIALPVMAIAA. A lipid anchor (N-palmitoyl cysteine) is attached at cysteine 22. Cysteine 22 carries the S-diacylglycerol cysteine lipid modification. The segment at 30 to 58 is disordered; that stretch reads NDGSEGMLGAGTGMDANGGNGNMSSEEQA. A compositionally biased stretch (gly residues) spans 35 to 50; the sequence is GMLGAGTGMDANGGNG. An OmpA-like domain is found at 60 to 173; the sequence is LQMQQLQQNN…SKNRRAVLVY (114 aa).

It belongs to the Pal lipoprotein family. As to quaternary structure, the Tol-Pal system is composed of five core proteins: the inner membrane proteins TolA, TolQ and TolR, the periplasmic protein TolB and the outer membrane protein Pal. They form a network linking the inner and outer membranes and the peptidoglycan layer.

Its subcellular location is the cell outer membrane. In terms of biological role, part of the Tol-Pal system, which plays a role in outer membrane invagination during cell division and is important for maintaining outer membrane integrity. This is Peptidoglycan-associated lipoprotein from Escherichia coli O157:H7.